Consider the following 615-residue polypeptide: Mitochondrial distribution and morphology protein 34 (615 aa).

Residues 1 to 195 enclose the SMP-LTD domain; the sequence is MAFNFNWSPL…LPAIIHRLSL (195 aa). Disordered regions lie at residues 293–313, 346–566, and 596–615; these read SDKP…RTSS, ATTG…PQPD, and PAFW…YEPR. Residues 301 to 313 show a composition bias toward polar residues; it reads TPASTPNLHRTSS. Residues 346 to 355 are compositionally biased toward low complexity; sequence ATTGLSLGSG. The span at 356-367 shows a compositional bias: basic residues; sequence RHSKAGRKKKMR. Polar residues-rich tracts occupy residues 384–403, 435–446, and 457–499; these read IGST…TRTP, DATTSARASESS, and VTAQ…YSSR. Positions 517–557 are enriched in low complexity; it reads QQQQFQQQQQQQQQQQQQQQQQQQQQQQQQQQQQQQQQQQQ. Basic and acidic residues predominate over residues 596 to 606; the sequence is PAFWEDSHQHD.

This sequence belongs to the MDM34 family. As to quaternary structure, component of the ER-mitochondria encounter structure (ERMES) or MDM complex, composed of mmm-1, mdm10, mdm12 and mdm34.

It is found in the mitochondrion outer membrane. Component of the ERMES/MDM complex, which serves as a molecular tether to connect the endoplasmic reticulum (ER) and mitochondria. Components of this complex are involved in the control of mitochondrial shape and protein biogenesis, and function in nonvesicular lipid trafficking between the ER and mitochondria. Mdm34 is required for the interaction of the ER-resident membrane protein mmm-1 and the outer mitochondrial membrane-resident beta-barrel protein mdm10. The chain is Mitochondrial distribution and morphology protein 34 from Neurospora crassa (strain ATCC 24698 / 74-OR23-1A / CBS 708.71 / DSM 1257 / FGSC 987).